A 132-amino-acid chain; its full sequence is Acid shock protein (132 aa).

An N-terminal signal peptide occupies residues 1 to 21 (MKKVLALVVAAAMGLSSAAFA). The segment covering 20–45 (FAAETTTSSAAPATATATTTKAAPAK) has biased composition (low complexity). Positions 20–132 (FAAETTTSSA…AAKPAAQPAA (113 aa)) are disordered. The propeptide occupies 22–90 (AETTTSSAAP…TTAPVEQKAQ (69 aa)). Over residues 62 to 71 (AAKKHHKKAV) the composition is skewed to basic residues. 2 stretches are compositionally biased toward low complexity: residues 76-90 (AAPA…QKAQ) and 100-109 (AKPAVAQKAQ). Residues 110–119 (AAKKHHKKAV) show a composition bias toward basic residues.

The protein belongs to the Asr family. In terms of processing, proteolytic processing gives rise to the active protein.

The protein localises to the periplasm. Required for growth and/or survival at acidic conditions. This chain is Acid shock protein, found in Enterobacter sp. (strain 638).